We begin with the raw amino-acid sequence, 241 residues long: MSDKTPRYSRILLKLSGEALAGTKDMGIDTEVLDKMSLSIAHLRGLGVQVGIVVGGGNLYRGAQLQKEGLVGRVTGDQMGMLATVMNGLAMRDALERRNIKTRLMSALPIGEVTESYSSRNAIRYLKNGEVCIFVAGTGNPFFTTDTAACLRGIEIEAGLILKATKVDGVYDKDPSLHSDAVKYDGLTFDEVLEQKLGVMDLTAIALCREHDVPLQVFDMNKPNALLNVVMGENEGTRVYH.

An ATP-binding site is contributed by 14–17; the sequence is KLSG. Position 56 (Gly56) interacts with UMP. 2 residues coordinate ATP: Gly57 and Arg61. UMP-binding positions include Asp77 and 138-145; that span reads TGNPFFTT. ATP is bound by residues Thr165, Tyr171, and Asp174.

The protein belongs to the UMP kinase family. In terms of assembly, homohexamer.

It is found in the cytoplasm. The enzyme catalyses UMP + ATP = UDP + ADP. The protein operates within pyrimidine metabolism; CTP biosynthesis via de novo pathway; UDP from UMP (UMPK route): step 1/1. Its activity is regulated as follows. Inhibited by UTP. Its function is as follows. Catalyzes the reversible phosphorylation of UMP to UDP. This is Uridylate kinase from Psychrobacter arcticus (strain DSM 17307 / VKM B-2377 / 273-4).